We begin with the raw amino-acid sequence, 143 residues long: Large ribosomal subunit protein uL11 (143 aa).

This sequence belongs to the universal ribosomal protein uL11 family. Part of the ribosomal stalk of the 50S ribosomal subunit. Interacts with L10 and the large rRNA to form the base of the stalk. L10 forms an elongated spine to which L12 dimers bind in a sequential fashion forming a multimeric L10(L12)X complex. Post-translationally, one or more lysine residues are methylated.

In terms of biological role, forms part of the ribosomal stalk which helps the ribosome interact with GTP-bound translation factors. The polypeptide is Large ribosomal subunit protein uL11 (Marinobacter nauticus (strain ATCC 700491 / DSM 11845 / VT8) (Marinobacter aquaeolei)).